The chain runs to 317 residues: MSCNYADGLSAYDNKGILGAPESFDSDEVVAEKCQELAELIKKSGHVVLHTGAGISTSAGIPDFRGPKGVWTLEEKGEKPDFNVSFDEARPTKTHMAIIALIESGYVQYVISQNIDGLHLKSGLDRKYLSELHGNIYIEQCKKCRRQFVSPSAVETVGQKSLQRACKSSMDSKGRSCRSGILYDNVLDWEHDLPENDLEMGVMHSTVADLNIALGTTLQIVPSGDLPLKNLKCGGKFVICNLQPTKHDKKANLIISSYVDVVLSKVCKLLGVEIPEYSEASDPTKQSKPMEWTIPTSNVNTFHRQYKKYVYFIYYLL.

The Deacetylase sirtuin-type domain maps to 27-273; sequence DEVVAEKCQE…SKVCKLLGVE (247 aa). The NAD(+) site is built by Ala53, Thr57, Phe64, Arg65, Trp71, Gln113, and His133. The Proton acceptor role is filled by His133. Zn(2+)-binding residues include Cys141, Cys144, Cys166, and Cys177. NAD(+)-binding residues include Gly215, Asn241, Gln243, and Val259.

This sequence belongs to the sirtuin family. Class IV subfamily. It depends on Zn(2+) as a cofactor. As to expression, widely expressed.

It localises to the nucleus. It is found in the chromosome. It catalyses the reaction N(6)-acetyl-L-lysyl-[protein] + NAD(+) + H2O = 2''-O-acetyl-ADP-D-ribose + nicotinamide + L-lysyl-[protein]. NAD-dependent histone deacylase that acts as a regulator of life span. The protein is NAD-dependent protein deacetylase Sirt6 of Drosophila melanogaster (Fruit fly).